Here is a 257-residue protein sequence, read N- to C-terminus: Glutamate racemase (257 aa).

Substrate contacts are provided by residues 12–13 and 44–45; these read DS and YG. The Proton donor/acceptor role is filled by Cys-75. 76–77 is a substrate binding site; it reads NT. The active-site Proton donor/acceptor is the Cys-185. A substrate-binding site is contributed by 186–187; sequence TH.

This sequence belongs to the aspartate/glutamate racemases family.

It catalyses the reaction L-glutamate = D-glutamate. It functions in the pathway cell wall biogenesis; peptidoglycan biosynthesis. Provides the (R)-glutamate required for cell wall biosynthesis. The polypeptide is Glutamate racemase (Clostridium botulinum (strain Langeland / NCTC 10281 / Type F)).